The following is an 88-amino-acid chain: Large ribosomal subunit protein bL27 (88 aa).

The interval 1–25 (MAHKKAGGSSRNGRDSPGQRRGIKR) is disordered.

This sequence belongs to the bacterial ribosomal protein bL27 family.

The protein is Large ribosomal subunit protein bL27 (rpmA) of Lawsonia intracellularis.